We begin with the raw amino-acid sequence, 248 residues long: 1-(5-phosphoribosyl)-5-[(5-phosphoribosylamino)methylideneamino] imidazole-4-carboxamide isomerase (248 aa).

The active-site Proton acceptor is the Asp7. Asp131 acts as the Proton donor in catalysis.

It belongs to the HisA/HisF family.

It is found in the cytoplasm. The enzyme catalyses 1-(5-phospho-beta-D-ribosyl)-5-[(5-phospho-beta-D-ribosylamino)methylideneamino]imidazole-4-carboxamide = 5-[(5-phospho-1-deoxy-D-ribulos-1-ylimino)methylamino]-1-(5-phospho-beta-D-ribosyl)imidazole-4-carboxamide. The protein operates within amino-acid biosynthesis; L-histidine biosynthesis; L-histidine from 5-phospho-alpha-D-ribose 1-diphosphate: step 4/9. The sequence is that of 1-(5-phosphoribosyl)-5-[(5-phosphoribosylamino)methylideneamino] imidazole-4-carboxamide isomerase from Baumannia cicadellinicola subsp. Homalodisca coagulata.